The sequence spans 243 residues: Small ribosomal subunit protein uS3 (243 aa).

The region spanning 39 to 110 (IRKFIHKKYG…QVRINVVEVE (72 aa)) is the KH type-2 domain. The disordered stretch occupies residues 217 to 243 (QQLPVGATPRRRAGRRPQQFEDRSNEG). Positions 234–243 (QQFEDRSNEG) are enriched in basic and acidic residues.

This sequence belongs to the universal ribosomal protein uS3 family. As to quaternary structure, part of the 30S ribosomal subunit. Forms a tight complex with proteins S10 and S14.

Binds the lower part of the 30S subunit head. Binds mRNA in the 70S ribosome, positioning it for translation. This chain is Small ribosomal subunit protein uS3, found in Synechococcus sp. (strain WH7803).